The chain runs to 504 residues: ATP synthase subunit alpha (504 aa).

An ATP-binding site is contributed by 172–179 (GDRQTGKT).

This sequence belongs to the ATPase alpha/beta chains family. As to quaternary structure, F-type ATPases have 2 components, CF(1) - the catalytic core - and CF(0) - the membrane proton channel. CF(1) has five subunits: alpha(3), beta(3), gamma(1), delta(1), epsilon(1). CF(0) has three main subunits: a(1), b(2) and c(9-12). The alpha and beta chains form an alternating ring which encloses part of the gamma chain. CF(1) is attached to CF(0) by a central stalk formed by the gamma and epsilon chains, while a peripheral stalk is formed by the delta and b chains.

It is found in the cell inner membrane. The catalysed reaction is ATP + H2O + 4 H(+)(in) = ADP + phosphate + 5 H(+)(out). Produces ATP from ADP in the presence of a proton gradient across the membrane. The alpha chain is a regulatory subunit. The polypeptide is ATP synthase subunit alpha (Petrotoga mobilis (strain DSM 10674 / SJ95)).